The following is a 443-amino-acid chain: Serine--tRNA ligase (443 aa).

246–248 is a binding site for L-serine; it reads TAE. ATP is bound at residue 277–279; sequence RAE. E300 is a binding site for L-serine. 367 to 370 provides a ligand contact to ATP; that stretch reads EISS. S402 provides a ligand contact to L-serine.

It belongs to the class-II aminoacyl-tRNA synthetase family. Type-1 seryl-tRNA synthetase subfamily. Homodimer. The tRNA molecule binds across the dimer.

The protein resides in the cytoplasm. The catalysed reaction is tRNA(Ser) + L-serine + ATP = L-seryl-tRNA(Ser) + AMP + diphosphate + H(+). It catalyses the reaction tRNA(Sec) + L-serine + ATP = L-seryl-tRNA(Sec) + AMP + diphosphate + H(+). It participates in aminoacyl-tRNA biosynthesis; selenocysteinyl-tRNA(Sec) biosynthesis; L-seryl-tRNA(Sec) from L-serine and tRNA(Sec): step 1/1. Catalyzes the attachment of serine to tRNA(Ser). Is also able to aminoacylate tRNA(Sec) with serine, to form the misacylated tRNA L-seryl-tRNA(Sec), which will be further converted into selenocysteinyl-tRNA(Sec). The polypeptide is Serine--tRNA ligase (Bradyrhizobium diazoefficiens (strain JCM 10833 / BCRC 13528 / IAM 13628 / NBRC 14792 / USDA 110)).